Here is a 398-residue protein sequence, read N- to C-terminus: Acetate kinase (398 aa).

Asn8 contributes to the Mg(2+) binding site. Lys15 is an ATP binding site. Substrate is bound at residue Arg89. Asp146 acts as the Proton donor/acceptor in catalysis. ATP-binding positions include 206–210, 281–283, and 329–333; these read HIGNG, DLR, and GVGEN. Glu383 serves as a coordination point for Mg(2+).

It belongs to the acetokinase family. Homodimer. Mg(2+) is required as a cofactor. The cofactor is Mn(2+).

Its subcellular location is the cytoplasm. The enzyme catalyses acetate + ATP = acetyl phosphate + ADP. It functions in the pathway metabolic intermediate biosynthesis; acetyl-CoA biosynthesis; acetyl-CoA from acetate: step 1/2. Catalyzes the formation of acetyl phosphate from acetate and ATP. Can also catalyze the reverse reaction. The sequence is that of Acetate kinase from Macrococcus caseolyticus (strain JCSC5402) (Macrococcoides caseolyticum).